A 342-amino-acid polypeptide reads, in one-letter code: Pre-mRNA-splicing factor 18 (342 aa).

The residue at position 1 (M1) is an N-acetylmethionine.

The protein belongs to the PRP18 family. In terms of assembly, heterodimer with PPIH. Interacts with PRPF4 and with the spliceosome. Part of a complex containing U4/U6 snRNPs.

It is found in the nucleus speckle. In terms of biological role, participates in the second step of pre-mRNA splicing. The polypeptide is Pre-mRNA-splicing factor 18 (PRPF18) (Pongo abelii (Sumatran orangutan)).